We begin with the raw amino-acid sequence, 166 residues long: Protein-export protein SecB (166 aa).

It belongs to the SecB family. In terms of assembly, homotetramer, a dimer of dimers. One homotetramer interacts with 1 SecA dimer.

It localises to the cytoplasm. In terms of biological role, one of the proteins required for the normal export of preproteins out of the cell cytoplasm. It is a molecular chaperone that binds to a subset of precursor proteins, maintaining them in a translocation-competent state. It also specifically binds to its receptor SecA. In Roseobacter denitrificans (strain ATCC 33942 / OCh 114) (Erythrobacter sp. (strain OCh 114)), this protein is Protein-export protein SecB.